Reading from the N-terminus, the 1005-residue chain is DNA double-strand break repair Rad50 ATPase (1005 aa).

ATP-binding positions include Lys14, 35–40, 62–64, and Gln134; these read GSGKSS and ITK. Coiled-coil stretches lie at residues 189 to 230, 292 to 321, 346 to 379, and 404 to 498; these read KENY…IEKL, LVDE…KQLE, LDTL…EIEK, and AVEY…LKEV. A Zinc-hook domain is found at 457–554; the sequence is IEEKKKVLEN…DIEKLKKEID (98 aa). Residues Cys502 and Cys505 each coordinate Zn(2+). Coiled-coil stretches lie at residues 523 to 600, 656 to 692, and 800 to 834; these read TQLN…YVIN, KEKC…ELIE, and RQEL…LKEM.

It belongs to the SMC family. RAD50 subfamily. In terms of assembly, homodimer. Forms a heterotetramer composed of two Mre11 subunits and two Rad50 subunits. The cofactor is Zn(2+).

Part of the Rad50/Mre11 complex, which is involved in the early steps of DNA double-strand break (DSB) repair. The complex may facilitate opening of the processed DNA ends to aid in the recruitment of HerA and NurA. Rad50 controls the balance between DNA end bridging and DNA resection via ATP-dependent structural rearrangements of the Rad50/Mre11 complex. In Methanocaldococcus jannaschii (strain ATCC 43067 / DSM 2661 / JAL-1 / JCM 10045 / NBRC 100440) (Methanococcus jannaschii), this protein is DNA double-strand break repair Rad50 ATPase.